Here is a 200-residue protein sequence, read N- to C-terminus: MKFSPLLDALIRELQVLPGVGPKSAQRMAFQLLERERKRGMQLGQTLQRALTEIGHCQHCRTFTENSLCDICANPKRAESGQLCIVETPADVAAIEQTHLYSGRYFVLMGHLSPLDGIGPKELGLDQLDNVLQGGQWKEVILATNPTIEGDATAFYIASMAKRYQINITRIAHGVPVGGELELVDGTTLSHSLSGRRPLE.

A C4-type zinc finger spans residues 57-72 (CQHCRTFTENSLCDIC). A Toprim domain is found at 81–176 (GQLCIVETPA…NITRIAHGVP (96 aa)).

It belongs to the RecR family.

Its function is as follows. May play a role in DNA repair. It seems to be involved in an RecBC-independent recombinational process of DNA repair. It may act with RecF and RecO. The protein is Recombination protein RecR of Tolumonas auensis (strain DSM 9187 / NBRC 110442 / TA 4).